The chain runs to 1109 residues: Ankyrin repeat- and BTB/POZ domain-containing protein 3 (1109 aa).

The helical transmembrane segment at 168 to 188 (IVLSWGLAAHCTAAALAALSL) threads the bilayer. The disordered stretch occupies residues 260 to 302 (SCSGPGPGSSSGSGPGPGSGPGAPAADKERETPGGGAASGGPC). The span at 264–280 (PGPGSSSGSGPGPGSGP) shows a compositional bias: gly residues. ANK repeat units lie at residues 608-637 (QGMT…DLNV), 654-683 (RHWT…KVEG), 692-721 (YSET…DPLI), 735-764 (GDMN…KEKS), and 830-859 (TWLE…TIQE). Positions 928–994 (SDVTFLVEGR…LYYGGPESLL (67 aa)) constitute a BTB domain.

The protein resides in the membrane. The polypeptide is Ankyrin repeat- and BTB/POZ domain-containing protein 3 (Abtb3) (Mus musculus (Mouse)).